The primary structure comprises 530 residues: CTP synthase (530 aa).

An amidoligase domain region spans residues 1-264; sequence MPKLIIVTGG…GDFLTRRLRL (264 aa). Serine 13 is a binding site for CTP. Residue serine 13 coordinates UTP. 14–19 is a binding site for ATP; that stretch reads GVGKGV. Tyrosine 54 lines the L-glutamine pocket. Aspartate 71 serves as a coordination point for ATP. Residues aspartate 71 and glutamate 139 each contribute to the Mg(2+) site. CTP is bound by residues 146–148, 185–190, and lysine 221; these read DYE and KTKPLQ. Residues 185-190 and lysine 221 contribute to the UTP site; that span reads KTKPLQ. The Glutamine amidotransferase type-1 domain occupies 289–530; it reads SVGMCGKYVE…LLKAALFAKR (242 aa). Glycine 351 is a binding site for L-glutamine. Catalysis depends on cysteine 378, which acts as the Nucleophile; for glutamine hydrolysis. Residues 379–382, glutamate 402, and arginine 459 contribute to the L-glutamine site; that span reads FGMQ. Residues histidine 504 and glutamate 506 contribute to the active site.

This sequence belongs to the CTP synthase family. As to quaternary structure, homotetramer.

It carries out the reaction UTP + L-glutamine + ATP + H2O = CTP + L-glutamate + ADP + phosphate + 2 H(+). It catalyses the reaction L-glutamine + H2O = L-glutamate + NH4(+). The enzyme catalyses UTP + NH4(+) + ATP = CTP + ADP + phosphate + 2 H(+). It participates in pyrimidine metabolism; CTP biosynthesis via de novo pathway; CTP from UDP: step 2/2. Its activity is regulated as follows. Allosterically activated by GTP, when glutamine is the substrate; GTP has no effect on the reaction when ammonia is the substrate. The allosteric effector GTP functions by stabilizing the protein conformation that binds the tetrahedral intermediate(s) formed during glutamine hydrolysis. Inhibited by the product CTP, via allosteric rather than competitive inhibition. Catalyzes the ATP-dependent amination of UTP to CTP with either L-glutamine or ammonia as the source of nitrogen. Regulates intracellular CTP levels through interactions with the four ribonucleotide triphosphates. The polypeptide is CTP synthase (Pyrobaculum aerophilum (strain ATCC 51768 / DSM 7523 / JCM 9630 / CIP 104966 / NBRC 100827 / IM2)).